The following is a 35-amino-acid chain: Photosystem II reaction center protein T (35 aa).

The chain crosses the membrane as a helical span at residues Ala3 to Phe23.

This sequence belongs to the PsbT family. As to quaternary structure, PSII is composed of 1 copy each of membrane proteins PsbA, PsbB, PsbC, PsbD, PsbE, PsbF, PsbH, PsbI, PsbJ, PsbK, PsbL, PsbM, PsbT, PsbY, PsbZ, Psb30/Ycf12, at least 3 peripheral proteins of the oxygen-evolving complex and a large number of cofactors. It forms dimeric complexes.

The protein localises to the plastid. Its subcellular location is the chloroplast thylakoid membrane. Found at the monomer-monomer interface of the photosystem II (PS II) dimer, plays a role in assembly and dimerization of PSII. PSII is a light-driven water plastoquinone oxidoreductase, using light energy to abstract electrons from H(2)O, generating a proton gradient subsequently used for ATP formation. The sequence is that of Photosystem II reaction center protein T from Asarum canadense (Wild ginger).